Here is a 426-residue protein sequence, read N- to C-terminus: Glutamate-1-semialdehyde 2,1-aminomutase (426 aa).

Lys265 is subject to N6-(pyridoxal phosphate)lysine.

It belongs to the class-III pyridoxal-phosphate-dependent aminotransferase family. HemL subfamily. As to quaternary structure, homodimer. The cofactor is pyridoxal 5'-phosphate.

Its subcellular location is the cytoplasm. It catalyses the reaction (S)-4-amino-5-oxopentanoate = 5-aminolevulinate. The protein operates within porphyrin-containing compound metabolism; protoporphyrin-IX biosynthesis; 5-aminolevulinate from L-glutamyl-tRNA(Glu): step 2/2. This Escherichia coli O127:H6 (strain E2348/69 / EPEC) protein is Glutamate-1-semialdehyde 2,1-aminomutase.